A 470-amino-acid polypeptide reads, in one-letter code: ATP synthase subunit beta (470 aa).

Position 158–165 (158–165) interacts with ATP; that stretch reads GGAGVGKT.

It belongs to the ATPase alpha/beta chains family. F-type ATPases have 2 components, CF(1) - the catalytic core - and CF(0) - the membrane proton channel. CF(1) has five subunits: alpha(3), beta(3), gamma(1), delta(1), epsilon(1). CF(0) has three main subunits: a(1), b(2) and c(9-12). The alpha and beta chains form an alternating ring which encloses part of the gamma chain. CF(1) is attached to CF(0) by a central stalk formed by the gamma and epsilon chains, while a peripheral stalk is formed by the delta and b chains.

It localises to the cell membrane. The enzyme catalyses ATP + H2O + 4 H(+)(in) = ADP + phosphate + 5 H(+)(out). Its function is as follows. Produces ATP from ADP in the presence of a proton gradient across the membrane. The catalytic sites are hosted primarily by the beta subunits. In Shouchella clausii (strain KSM-K16) (Alkalihalobacillus clausii), this protein is ATP synthase subunit beta.